The following is an 852-amino-acid chain: Zinc finger and SCAN domain-containing protein 29 (852 aa).

The SCAN box domain maps to 18 to 100 (RQRFRRFHYQ…TLVEDLEREP (83 aa)). 3 disordered regions span residues 96 to 182 (LERE…PKSG), 347 to 400 (ASHS…SAAP), and 502 to 557 (PNDG…RAPV). A Glycyl lysine isopeptide (Lys-Gly) (interchain with G-Cter in SUMO2) cross-link involves residue lysine 112. Serine 153 is modified (phosphoserine). A Glycyl lysine isopeptide (Lys-Gly) (interchain with G-Cter in SUMO2) cross-link involves residue lysine 180. A compositionally biased stretch (polar residues) spans 508 to 517 (ETASCPVQGT). Residues 528–545 (EADEATEEDSDDDEEDTE) are compositionally biased toward acidic residues. Position 561 is a phosphoserine (serine 561). A Glycyl lysine isopeptide (Lys-Gly) (interchain with G-Cter in SUMO2) cross-link involves residue lysine 576. The interval 603–625 (QGKGNESDCRSGRQWAKTSGEKR) is disordered. Lysine 652 participates in a covalent cross-link: Glycyl lysine isopeptide (Lys-Gly) (interchain with G-Cter in SUMO2). C2H2-type zinc fingers lie at residues 678–700 (YKCA…RRIH), 706–728 (YKCL…RRIH), 734–756 (YQCG…QRTH), 762–784 (YQCE…RRIH), 790–812 (HVCP…HRTH), and 818–840 (YGCH…GEIH).

Belongs to the krueppel C2H2-type zinc-finger protein family.

It localises to the nucleus. Functionally, may be involved in transcriptional regulation. This Homo sapiens (Human) protein is Zinc finger and SCAN domain-containing protein 29 (ZSCAN29).